The chain runs to 131 residues: Single-stranded DNA-binding protein 1 (131 aa).

The 103-residue stretch at 1–103 folds into the SSB domain; the sequence is MYNKVIAIGR…VLCQSFQLLE (103 aa).

Homotetramer.

This Streptococcus pyogenes serotype M6 (strain ATCC BAA-946 / MGAS10394) protein is Single-stranded DNA-binding protein 1 (ssb1).